The sequence spans 230 residues: MADLLGSILSSMEKPPTVHDQESRRKAREQAARLKKLEEDERRKKAEFRKKMEKEVSEFIKDSTLQKKKYNPMGKIERSILHDVAEVAGLTSFSFGEDEESRYVMLFKKEFAPSDEELEAYRKGEEWDPQKAEERRRLKEKAALEEEAASHTQKRPASPNSNYRDKYSHLIGTSAAKDAAHTLQANRAYGCVPVANKRDTRSIEEAMNEIRAKKRQKKGDEEAAGSGSSV.

A disordered region spans residues 1 to 45; the sequence is MADLLGSILSSMEKPPTVHDQESRRKAREQAARLKKLEEDERRKK. Basic and acidic residues predominate over residues 16–45; the sequence is PTVHDQESRRKAREQAARLKKLEEDERRKK. Residues 46–109 enclose the R3H domain; that stretch reads AEFRKKMEKE…ESRYVMLFKK (64 aa). Residues 119-144 are compositionally biased toward basic and acidic residues; that stretch reads EAYRKGEEWDPQKAEERRRLKEKAAL. 2 disordered regions span residues 119–169 and 185–230; these read EAYR…KYSH and ANRA…GSSV. Phosphoserine is present on Ser-158. Basic and acidic residues predominate over residues 196–211; that stretch reads NKRDTRSIEEAMNEIR.

In Danio rerio (Zebrafish), this protein is Sperm-associated antigen 7 homolog (spag7).